A 358-amino-acid polypeptide reads, in one-letter code: Peptide chain release factor 1 (358 aa).

Gln-233 bears the N5-methylglutamine mark. The segment covering 282–306 has biased composition (basic and acidic residues); it reads QRAASERSADRRGQVGSGDRSERVR. Positions 282-308 are disordered; that stretch reads QRAASERSADRRGQVGSGDRSERVRTY.

Belongs to the prokaryotic/mitochondrial release factor family. Methylated by PrmC. Methylation increases the termination efficiency of RF1.

It is found in the cytoplasm. Its function is as follows. Peptide chain release factor 1 directs the termination of translation in response to the peptide chain termination codons UAG and UAA. The polypeptide is Peptide chain release factor 1 (Afipia carboxidovorans (strain ATCC 49405 / DSM 1227 / KCTC 32145 / OM5) (Oligotropha carboxidovorans)).